Reading from the N-terminus, the 391-residue chain is Succinyl-diaminopimelate desuccinylase (391 aa).

His-67 is a binding site for Zn(2+). Asp-69 is a catalytic residue. Zn(2+) is bound at residue Asp-101. Catalysis depends on Glu-135, which acts as the Proton acceptor. 3 residues coordinate Zn(2+): Glu-136, Glu-164, and His-353.

This sequence belongs to the peptidase M20A family. DapE subfamily. Homodimer. Zn(2+) serves as cofactor. Co(2+) is required as a cofactor.

The enzyme catalyses N-succinyl-(2S,6S)-2,6-diaminopimelate + H2O = (2S,6S)-2,6-diaminopimelate + succinate. It participates in amino-acid biosynthesis; L-lysine biosynthesis via DAP pathway; LL-2,6-diaminopimelate from (S)-tetrahydrodipicolinate (succinylase route): step 3/3. In terms of biological role, catalyzes the hydrolysis of N-succinyl-L,L-diaminopimelic acid (SDAP), forming succinate and LL-2,6-diaminopimelate (DAP), an intermediate involved in the bacterial biosynthesis of lysine and meso-diaminopimelic acid, an essential component of bacterial cell walls. This is Succinyl-diaminopimelate desuccinylase from Rickettsia bellii (strain OSU 85-389).